We begin with the raw amino-acid sequence, 544 residues long: POTE ankyrin domain family member B2 (544 aa).

ANK repeat units lie at residues 135-167, 168-200, 201-233, 234-266, and 267-299; these read QKRTALHLASANGNSEVVQLLLDRRCQLNVLDN, KKRTALIKAVQCQEDECVLMLLEHGADGNIQDE, YGNTALHYAIYNEDKLMAKALLLYGADIESKNK, CGLTPLLLGVHEQKQEVVKFLIKKKANLNALDR, and YGRTALILAVCCGSASIVNLLLEQNVDVSSQDL. The disordered stretch occupies residues 332-457; it reads SSENSNPEQD…NTGISQDEIL (126 aa). 2 stretches are compositionally biased toward basic and acidic residues: residues 340–355 and 364–375; these read QDLKLTSEEESQRLKV and MSQEPEINKDCD. Residues 439-457 are compositionally biased toward polar residues; sequence TQKQLSEEQNTGISQDEIL.

It belongs to the POTE family.

The sequence is that of POTE ankyrin domain family member B2 (POTEB2) from Homo sapiens (Human).